The sequence spans 126 residues: Probable cystatin-16 (126 aa).

The first 20 residues, 1–20 (MFLKATLLLGLAVLGMHVWA), serve as a signal peptide directing secretion. A disulfide bridge connects residues C84 and C94. An N-linked (GlcNAc...) asparagine glycan is attached at N106.

This sequence belongs to the cystatin family.

It localises to the secreted. This chain is Probable cystatin-16, found in Bos taurus (Bovine).